The sequence spans 150 residues: Ribonuclease H (150 aa).

The RNase H type-1 domain occupies 1-141 (MKSIEVHTDG…VDVLARNQAI (141 aa)). Residues Asp9, Glu47, Asp69, and Asp133 each contribute to the Mg(2+) site.

The protein belongs to the RNase H family. In terms of assembly, monomer. Mg(2+) is required as a cofactor.

It localises to the cytoplasm. The enzyme catalyses Endonucleolytic cleavage to 5'-phosphomonoester.. Endonuclease that specifically degrades the RNA of RNA-DNA hybrids. The protein is Ribonuclease H of Xanthomonas axonopodis pv. citri (strain 306).